The primary structure comprises 213 residues: UPF0329 protein ECU04_0110 (213 aa).

It belongs to the UPF0329 family.

The polypeptide is UPF0329 protein ECU04_0110 (Encephalitozoon cuniculi (strain GB-M1) (Microsporidian parasite)).